Consider the following 104-residue polypeptide: L-rhamnose mutarotase (104 aa).

Position 18 (Tyr-18) interacts with substrate. His-22 serves as the catalytic Proton donor. Substrate-binding positions include Tyr-41 and 76 to 77; that span reads WW.

It belongs to the rhamnose mutarotase family. In terms of assembly, homodimer.

The protein resides in the cytoplasm. The catalysed reaction is alpha-L-rhamnose = beta-L-rhamnose. It functions in the pathway carbohydrate metabolism; L-rhamnose metabolism. Its function is as follows. Involved in the anomeric conversion of L-rhamnose. The protein is L-rhamnose mutarotase of Salmonella heidelberg (strain SL476).